The following is a 400-amino-acid chain: Elongation factor Tu (400 aa).

Residues 10-210 enclose the tr-type G domain; it reads KPHCNVGTIG…VDSYIPIPPR (201 aa). The interval 19–26 is G1; that stretch reads GHVDHGKT. Position 19–26 (19–26) interacts with GTP; that stretch reads GHVDHGKT. T26 contacts Mg(2+). The G2 stretch occupies residues 60 to 64; the sequence is GLTIA. Residues 81–84 are G3; the sequence is DCPG. GTP-binding positions include 81 to 85 and 136 to 139; these read DCPGH and NKCD. The interval 136–139 is G4; it reads NKCD. The G5 stretch occupies residues 174-176; it reads SAI.

This sequence belongs to the TRAFAC class translation factor GTPase superfamily. Classic translation factor GTPase family. EF-Tu/EF-1A subfamily. In terms of assembly, monomer.

The protein localises to the cytoplasm. It catalyses the reaction GTP + H2O = GDP + phosphate + H(+). GTP hydrolase that promotes the GTP-dependent binding of aminoacyl-tRNA to the A-site of ribosomes during protein biosynthesis. This Dehalococcoides mccartyi (strain ATCC BAA-2266 / KCTC 15142 / 195) (Dehalococcoides ethenogenes (strain 195)) protein is Elongation factor Tu.